An 866-amino-acid chain; its full sequence is Probable beta-glucosidase F (866 aa).

Positions 1-20 (MAAFPAYLALLSYLVPGALS) are cleaved as a signal peptide. 3 N-linked (GlcNAc...) asparagine glycosylation sites follow: Asn65, Asn73, and Asn257. The active site involves Asp285. Residues Asn328, Asn360, Asn395, Asn421, Asn474, Asn659, Asn664, and Asn724 are each glycosylated (N-linked (GlcNAc...) asparagine). The tract at residues 725-748 (SSKTYPYPDGYTTEPKPAPRAGGA) is disordered.

The protein belongs to the glycosyl hydrolase 3 family.

The protein resides in the secreted. It catalyses the reaction Hydrolysis of terminal, non-reducing beta-D-glucosyl residues with release of beta-D-glucose.. Its pathway is glycan metabolism; cellulose degradation. Functionally, beta-glucosidases are one of a number of cellulolytic enzymes involved in the degradation of cellulosic biomass. Catalyzes the last step releasing glucose from the inhibitory cellobiose. The polypeptide is Probable beta-glucosidase F (bglF) (Aspergillus oryzae (strain ATCC 42149 / RIB 40) (Yellow koji mold)).